The following is a 113-amino-acid chain: ATP synthase epsilon chain (113 aa).

Belongs to the ATPase epsilon chain family. In terms of assembly, F-type ATPases have 2 components, CF(1) - the catalytic core - and CF(0) - the membrane proton channel. CF(1) has five subunits: alpha(3), beta(3), gamma(1), delta(1), epsilon(1). CF(0) has three main subunits: a, b and c.

It is found in the cell membrane. In terms of biological role, produces ATP from ADP in the presence of a proton gradient across the membrane. The polypeptide is ATP synthase epsilon chain (Wolbachia pipientis subsp. Culex pipiens (strain wPip)).